The chain runs to 163 residues: MPLASPRQLFLLAFLACVAIMGGALYLEHVVGLEACPLCVVQRIFFILIGLTCLAGAIQGPGLRGRRIYSVLVFLLALGGGATAARQVWLQTVPLDQLPACLPSLDYMMQALPFQEVIRLVLHGTADCAQVSWTLFTLSIPEWSLLAFVAYLGFSIVQFLRRA.

At 1 to 9 the chain is on the cytoplasmic side; it reads MPLASPRQL. Residues 10–26 traverse the membrane as a helical segment; the sequence is FLLAFLACVAIMGGALY. At 27-44 the chain is on the periplasmic side; sequence LEHVVGLEACPLCVVQRI. Cysteine 36 and cysteine 39 are disulfide-bonded. The helical transmembrane segment at 45–61 threads the bilayer; that stretch reads FFILIGLTCLAGAIQGP. Topologically, residues 62–67 are cytoplasmic; the sequence is GLRGRR. Residues 68–85 traverse the membrane as a helical segment; the sequence is IYSVLVFLLALGGGATAA. Over 86–142 the chain is Periplasmic; sequence RQVWLQTVPLDQLPACLPSLDYMMQALPFQEVIRLVLHGTADCAQVSWTLFTLSIPE. Cysteine 101 and cysteine 128 form a disulfide bridge. The chain crosses the membrane as a helical span at residues 143 to 161; it reads WSLLAFVAYLGFSIVQFLR. The Cytoplasmic portion of the chain corresponds to 162 to 163; that stretch reads RA.

The protein belongs to the DsbB family.

It is found in the cell inner membrane. Its function is as follows. Required for disulfide bond formation in some periplasmic proteins. Acts by oxidizing the DsbA protein. The protein is Disulfide bond formation protein B 1 (dsbB1) of Pseudomonas aeruginosa (strain ATCC 15692 / DSM 22644 / CIP 104116 / JCM 14847 / LMG 12228 / 1C / PRS 101 / PAO1).